The primary structure comprises 192 residues: ER protein translocation subcomplex subunit sec67 (192 aa).

In terms of assembly, component of the heterotetrameric Sec62/63complex composed of sec62, sec63, sec66 and sec72. The Sec62/63 complex associates with the Sec61 complex to form the Sec complex.

It is found in the cytoplasm. It localises to the nucleus. Its function is as follows. Acts as a non-essential component of the Sec62/63 complex which is involved in SRP-independent post-translational translocation across the endoplasmic reticulum (ER) and functions together with the Sec61 complex and bip1 in a channel-forming translocon complex. A cycle of assembly and disassembly of Sec62/63 complex from sec61 may govern the activity of the translocon. sec72 may be involved in signal peptide recognition for a defined subset of leader peptides, or may increase the efficiency of unusual or 'difficult' secretory precursors to the translocation pore, it may be that this protein binds charged leader peptides to the membrane until they engage the translocation apparatus. In Schizosaccharomyces pombe (strain 972 / ATCC 24843) (Fission yeast), this protein is ER protein translocation subcomplex subunit sec67 (sec67).